We begin with the raw amino-acid sequence, 113 residues long: UPF0122 protein SSU98_0878 (113 aa).

Belongs to the UPF0122 family.

Functionally, might take part in the signal recognition particle (SRP) pathway. This is inferred from the conservation of its genetic proximity to ftsY/ffh. May be a regulatory protein. The sequence is that of UPF0122 protein SSU98_0878 from Streptococcus suis (strain 98HAH33).